An 89-amino-acid chain; its full sequence is Small ribosomal subunit protein uS15 (89 aa).

The segment at 1-25 (MSLDTTEKQQLINTHQTHGTDTGSA) is disordered. Polar residues predominate over residues 8-25 (KQQLINTHQTHGTDTGSA).

Belongs to the universal ribosomal protein uS15 family. Part of the 30S ribosomal subunit. Forms a bridge to the 50S subunit in the 70S ribosome, contacting the 23S rRNA.

Functionally, one of the primary rRNA binding proteins, it binds directly to 16S rRNA where it helps nucleate assembly of the platform of the 30S subunit by binding and bridging several RNA helices of the 16S rRNA. In terms of biological role, forms an intersubunit bridge (bridge B4) with the 23S rRNA of the 50S subunit in the ribosome. This chain is Small ribosomal subunit protein uS15, found in Synechococcus sp. (strain CC9902).